Consider the following 302-residue polypeptide: Short-chain dehydrogenase/reductase 3 (302 aa).

4 helical membrane-spanning segments follow: residues Leu-9 to Leu-29, Ile-170 to Thr-190, Ala-195 to Thr-215, and Ala-253 to Leu-273. Ser-175 contributes to the substrate binding site. Residue Tyr-188 is the Proton acceptor of the active site.

The protein belongs to the short-chain dehydrogenases/reductases (SDR) family. In terms of tissue distribution, widely expressed with highest levels found in heart, placenta, lung, liver, kidney, pancreas, thyroid, testis, stomach, trachea and spinal cord. Lower levels found in skeletal muscle, intestine and lymph node. No expression detected in brain. In the retina, expressed in cone but not rod outer segments.

It localises to the membrane. The catalysed reaction is all-trans-retinol + NADP(+) = all-trans-retinal + NADPH + H(+). Its function is as follows. Catalyzes the reduction of all-trans-retinal to all-trans-retinol in the presence of NADPH. This is Short-chain dehydrogenase/reductase 3 (DHRS3) from Homo sapiens (Human).